We begin with the raw amino-acid sequence, 647 residues long: Threonine--tRNA ligase (647 aa).

The TGS domain occupies 1–61 (MIKITFPDGA…EEDGSIEIVT (61 aa)). A catalytic region spans residues 240–538 (DHRKLGKELD…LIETYKGAFP (299 aa)). Zn(2+)-binding residues include cysteine 334, histidine 385, and histidine 515.

This sequence belongs to the class-II aminoacyl-tRNA synthetase family. Homodimer. Zn(2+) serves as cofactor.

The protein localises to the cytoplasm. The enzyme catalyses tRNA(Thr) + L-threonine + ATP = L-threonyl-tRNA(Thr) + AMP + diphosphate + H(+). In terms of biological role, catalyzes the attachment of threonine to tRNA(Thr) in a two-step reaction: L-threonine is first activated by ATP to form Thr-AMP and then transferred to the acceptor end of tRNA(Thr). Also edits incorrectly charged L-seryl-tRNA(Thr). The protein is Threonine--tRNA ligase of Streptococcus pyogenes serotype M6 (strain ATCC BAA-946 / MGAS10394).